The chain runs to 435 residues: GTPase Der (435 aa).

EngA-type G domains are found at residues 3 to 168 (PLVA…PDET) and 176 to 351 (IKLA…QNRQ). Residues 9–16 (GRPNVGKS), 56–60 (DTGGY), 120–123 (NKVE), 182–189 (GRPNVGKS), 229–233 (DTAGL), and 294–297 (NKWD) contribute to the GTP site. In terms of domain architecture, KH-like spans 352–435 (KKISTSELNR…VPVSFRYRKK (84 aa)).

This sequence belongs to the TRAFAC class TrmE-Era-EngA-EngB-Septin-like GTPase superfamily. EngA (Der) GTPase family. Associates with the 50S ribosomal subunit.

In terms of biological role, GTPase that plays an essential role in the late steps of ribosome biogenesis. The chain is GTPase Der from Chlorobium phaeobacteroides (strain BS1).